A 443-amino-acid polypeptide reads, in one-letter code: Adenylosuccinate synthetase (443 aa).

Residues 12-18 (GDEGKGK) and 40-42 (GHT) each bind GTP. Asp13 (proton acceptor) is an active-site residue. 2 residues coordinate Mg(2+): Asp13 and Gly40. IMP contacts are provided by residues 13-16 (DEGK), 38-41 (NAGH), Thr128, Arg142, Gln223, Thr238, and Arg302. His41 serves as the catalytic Proton donor. Residue 298–304 (TTTGRRR) coordinates substrate. GTP-binding positions include Arg304, 330-332 (KLD), and 412-414 (SLG).

This sequence belongs to the adenylosuccinate synthetase family. Homodimer. Mg(2+) is required as a cofactor.

It localises to the cytoplasm. It catalyses the reaction IMP + L-aspartate + GTP = N(6)-(1,2-dicarboxyethyl)-AMP + GDP + phosphate + 2 H(+). The protein operates within purine metabolism; AMP biosynthesis via de novo pathway; AMP from IMP: step 1/2. Functionally, plays an important role in the de novo pathway of purine nucleotide biosynthesis. Catalyzes the first committed step in the biosynthesis of AMP from IMP. The polypeptide is Adenylosuccinate synthetase (Picosynechococcus sp. (strain ATCC 27264 / PCC 7002 / PR-6) (Agmenellum quadruplicatum)).